The sequence spans 232 residues: Charged multivesicular body protein 4c (232 aa).

2 disordered regions span residues 1 to 23 (MSKL…PSAQ) and 177 to 232 (NKKM…AWAT). Residues 1–153 (MSKLGKFFKG…EISEAFSQRV (153 aa)) form an intramolecular interaction with C-terminus region. Coiled coils occupy residues 21 to 45 (SAQE…YLEN) and 125 to 185 (LNKI…SLEL). The intramolecular interaction with N-terminus stretch occupies residues 154-232 (QFADGFDEAE…DFKQLAAWAT (79 aa)). Serine 210 is modified (phosphoserine; by AURKB).

This sequence belongs to the SNF7 family. In terms of assembly, probable core component of the endosomal sorting required for transport complex III (ESCRT-III). ESCRT-III components are thought to multimerize to form a flat lattice on the perimeter membrane of the endosome. Several assembly forms of ESCRT-III may exist that interact and act sequentially. Self-associates. Interacts with CHMP2A. Interacts with CHMP4A. Interacts with CHMP4B. Interacts with CHMP6. Interacts with VPS4A. Interacts with PDCD6IP; the interaction is direct. In terms of processing, phosphorylated at Ser-210 by AURKB during cytokinesis: together with ZFYVE19/ANCHR, phosphorylated CHMP4C retains abscission-competent VPS4 (VPS4A and/or VPS4B) at the midbody ring until abscission checkpoint signaling is terminated at late cytokinesis.

The protein localises to the cytoplasm. Its subcellular location is the cytosol. The protein resides in the late endosome membrane. It localises to the midbody. It is found in the midbody ring. Its function is as follows. Probable core component of the endosomal sorting required for transport complex III (ESCRT-III) which is involved in multivesicular bodies (MVBs) formation and sorting of endosomal cargo proteins into MVBs. MVBs contain intraluminal vesicles (ILVs) that are generated by invagination and scission from the limiting membrane of the endosome and mostly are delivered to lysosomes enabling degradation of membrane proteins, such as stimulated growth factor receptors, lysosomal enzymes and lipids. The MVB pathway appears to require the sequential function of ESCRT-O, -I,-II and -III complexes. ESCRT-III proteins mostly dissociate from the invaginating membrane before the ILV is released. The ESCRT machinery also functions in topologically equivalent membrane fission events, such as the terminal stages of cytokinesis. Key component of the cytokinesis checkpoint, a process required to delay abscission to prevent both premature resolution of intercellular chromosome bridges and accumulation of DNA damage: upon phosphorylation by AURKB, together with ZFYVE19/ANCHR, retains abscission-competent VPS4 (VPS4A and/or VPS4B) at the midbody ring until abscission checkpoint signaling is terminated at late cytokinesis. Deactivation of AURKB results in dephosphorylation of CHMP4C followed by its dissociation from ANCHR and VPS4 and subsequent abscission. ESCRT-III proteins are believed to mediate the necessary vesicle extrusion and/or membrane fission activities, possibly in conjunction with the AAA ATPase VPS4. CHMP4A/B/C are required for the exosomal release of SDCBP, CD63 and syndecan. In Mus musculus (Mouse), this protein is Charged multivesicular body protein 4c (Chmp4c).